The following is a 591-amino-acid chain: Probable anion transporter 4, chloroplastic (591 aa).

Residues 1 to 38 form a disordered region; it reads MAMGAVLSSRTFASPLSSSGKQHPPQNNKCTCSSPPTR. A chloroplast-targeting transit peptide spans 1–76; that stretch reads MAMGAVLSSR…LSARFHQPVV (76 aa). The span at 8–36 shows a compositional bias: polar residues; that stretch reads SSRTFASPLSSSGKQHPPQNNKCTCSSPP. The next 11 helical transmembrane spans lie at 184-204, 220-240, 249-269, 271-291, 313-333, 336-356, 402-422, 440-460, 475-495, 531-551, and 565-585; these read VVLL…NMSI, VGLI…LGGI, VVLG…PLAA, IGLP…GVAM, LVYS…PLLI, FGWP…FALW, VWAL…LLTW, LLCV…GWIA, KIMQ…LSKV, AGVL…FGTA, and VFQV…VFST.

It belongs to the major facilitator superfamily. Sodium/anion cotransporter (TC 2.A.1.14) family.

Its subcellular location is the plastid. The protein resides in the chloroplast membrane. Probable anion transporter. In Oryza sativa subsp. japonica (Rice), this protein is Probable anion transporter 4, chloroplastic (PHT4;4).